Reading from the N-terminus, the 522-residue chain is Putative malate dehydrogenase 1B (522 aa).

The tract at residues 495 to 522 (EETEKSSSEDTPEAAAAAVSTGDETVPS) is disordered.

This sequence belongs to the LDH/MDH superfamily. MDH type 2 family.

The polypeptide is Putative malate dehydrogenase 1B (MDH1B) (Branchiostoma floridae (Florida lancelet)).